A 130-amino-acid polypeptide reads, in one-letter code: Small ribosomal subunit protein uS8 (130 aa).

The protein belongs to the universal ribosomal protein uS8 family. Part of the 30S ribosomal subunit. Contacts proteins S5 and S12.

In terms of biological role, one of the primary rRNA binding proteins, it binds directly to 16S rRNA central domain where it helps coordinate assembly of the platform of the 30S subunit. In Cellvibrio japonicus (strain Ueda107) (Pseudomonas fluorescens subsp. cellulosa), this protein is Small ribosomal subunit protein uS8.